Reading from the N-terminus, the 976-residue chain is Terminal uridylyltransferase 1 (976 aa).

2 disordered regions span residues 1–47 (MVSK…DADF) and 129–185 (TGRS…TTEG). A required for oligomerization and may contribute to the incorporation into the MPsome complex region spans residues 1–188 (MVSKYHRLLQ…EDDTTEGPRG (188 aa)). Residues 147-183 (ADDESDGNLDTDGSDASEGDEVESTTDADVYGEDDTT) show a composition bias toward acidic residues. The C2H2-type; atypical zinc-finger motif lies at 190–221 (VRLYSCDACPHAVFTTHAALLAHAEEHHADLL). 4 residues coordinate Zn(2+): Cys-195, Cys-198, His-212, and His-217. Residues Ser-298 and 309 to 312 (ADID) contribute to the UTP site. Residues Asp-310 and Asp-312 each coordinate Mg(2+). Position 358 (Arg-358) interacts with RNA. The PAP-associated domain maps to 366–425 (ASSPILTVARRDAEDVVARSIRFILNGPATREDRLLLEGSVRDAVGPTGVQQVWWNRTSD). UTP-binding positions include 480-484 (GIRNS), Lys-505, Lys-509, and 523-524 (SY). The short motif at 652 to 661 (IEDPYEENLN) is the Nucleotide recognition motif (NRM) element. The segment at 700 to 976 (DSSGTPAAGG…SKVTPFKSPR (277 aa)) is important for catalytic activity and RNA binding. Residues 732–755 (SESRRLPQSNSDNSGRIANGDNES) are disordered.

Belongs to the DNA polymerase type-B-like family. Oligomer. Component of the mitochondrial 3' processome (MPsome) complex composed at least of terminal uridylyltransferase KRET1/TUT1, 3'-5' exonuclease DSS1, MPSS1, MPSS2 and MPSS3. Within the complex, interacts with DSS1, MPSS1 and MPSS3. It depends on Mg(2+) as a cofactor. Mn(2+) serves as cofactor.

The protein resides in the mitochondrion. The catalysed reaction is RNA(n) + UTP = RNA(n)-3'-uridine ribonucleotide + diphosphate. Functionally, terminal uridylyltransferase which is involved in the post-transcriptional editing of mitochondrial RNA, a process involving the addition and deletion of uridine (U) nucleotides in the pre-RNA. Specifically, catalyzes the addition of Us to the 3'-hydroxyl group of guided RNA (gRNA), ribosomal RNA (rRNA) and some mRNAs. As part of the mitochondrial 3' processome (MPsome), catalyzes the primary 3' uridylation of gRNA precursors to facilitate their recognition and to induce their processive 3'-5' degradation by DSS1, and the secondary 3' uridylation of mature gRNAs. Involved in the 3' uridylylation of the long A/U tail of some edited and never-edited mRNAs. Promotes 3' uridylylation-mediated decay of some never-edited mRNAs. Does not mediate RNA-independent UTP polymerization. This Trypanosoma brucei brucei protein is Terminal uridylyltransferase 1.